A 211-amino-acid chain; its full sequence is Large ribosomal subunit protein uL3 (211 aa).

The interval 130 to 154 is disordered; it reads RGPMAHGSKFHRHQGSNGSATTPGR.

This sequence belongs to the universal ribosomal protein uL3 family. As to quaternary structure, part of the 50S ribosomal subunit. Forms a cluster with proteins L14 and L19.

Its function is as follows. One of the primary rRNA binding proteins, it binds directly near the 3'-end of the 23S rRNA, where it nucleates assembly of the 50S subunit. This Lachnospira eligens (strain ATCC 27750 / DSM 3376 / VPI C15-48 / C15-B4) (Eubacterium eligens) protein is Large ribosomal subunit protein uL3.